Reading from the N-terminus, the 689-residue chain is Methionine--tRNA ligase (689 aa).

The 'HIGH' region motif lies at 15–25 (PYANGPIHLGH). 4 residues coordinate Zn(2+): C146, C149, C159, and C162. The 'KMSKS' region motif lies at 332–336 (KMSKS). K335 is an ATP binding site. The tRNA-binding domain occupies 588 to 689 (DFAKIDLRIA…EGAQPGMRVK (102 aa)).

The protein belongs to the class-I aminoacyl-tRNA synthetase family. MetG type 1 subfamily. As to quaternary structure, homodimer. Zn(2+) serves as cofactor.

Its subcellular location is the cytoplasm. It carries out the reaction tRNA(Met) + L-methionine + ATP = L-methionyl-tRNA(Met) + AMP + diphosphate. Is required not only for elongation of protein synthesis but also for the initiation of all mRNA translation through initiator tRNA(fMet) aminoacylation. In Shewanella sp. (strain W3-18-1), this protein is Methionine--tRNA ligase.